We begin with the raw amino-acid sequence, 394 residues long: MNDSNRLRLTWISYFSYALTGALVIVTGMVMGNIAEYFNLPVSSMSNTFTFLNAGILISIFLNAWLMEIIPLKRQLMFGFVLMVLAIAGLMLGKSLTMFSLCMFILGVVSGITMSIGTFLITHMYAGRQRGSRLLFTDSFFSMAGMIFPIVAAMLLARQIGWYWVYACIGLLYVGIFVLTLFSEFPVLGNKGADAGQPVVKEKWGIGVLFLSIAALCYILGQLGFIQWVPEYATKSFGMDISQAGKLVSDFWTSYMIGMWVFSFILRFFDLQRIVTILAALATGAMYLFVSTDNPEHLSYYIMALGFVSSAIYTTLITLGSLQTKVSSPKLVNFILTCGTIGTMLTFVVTGPIVAKGGAHAALTTANGLYLAVFVMCLLLGFVTKHRSHGHVTH.

Transmembrane regions (helical) follow at residues 11–31 (WISY…GMVM), 51–71 (FLNA…EIIP), 76–96 (LMFG…GKSL), 101–121 (LCMF…TFLI), 134–154 (LLFT…VAAM), 162–182 (WYWV…LTLF), 206–226 (IGVL…LGFI), 251–271 (FWTS…FFDL), 274–294 (IVTI…STDN), 302–322 (IMAL…LGSL), 334–354 (FILT…GPIV), and 363–383 (LTTA…LGFV).

The protein belongs to the major facilitator superfamily. TsgA family.

Its subcellular location is the cell inner membrane. This Serratia proteamaculans (strain 568) protein is Protein TsgA homolog.